The primary structure comprises 409 residues: Elongation factor Tu (409 aa).

Residues 10 to 214 (KPHVNIGTIG…EVDAYIPTPE (205 aa)) enclose the tr-type G domain. The tract at residues 19-26 (GHVDHGKT) is G1. GTP is bound at residue 19-26 (GHVDHGKT). Thr-26 is a Mg(2+) binding site. Positions 60–64 (GITIN) are G2. The segment at 81–84 (DCPG) is G3. Residues 81–85 (DCPGH) and 136–139 (NKQD) contribute to the GTP site. The segment at 136–139 (NKQD) is G4. The tract at residues 174-176 (SAL) is G5.

This sequence belongs to the TRAFAC class translation factor GTPase superfamily. Classic translation factor GTPase family. EF-Tu/EF-1A subfamily. In terms of assembly, monomer.

It localises to the cytoplasm. The enzyme catalyses GTP + H2O = GDP + phosphate + H(+). In terms of biological role, GTP hydrolase that promotes the GTP-dependent binding of aminoacyl-tRNA to the A-site of ribosomes during protein biosynthesis. The protein is Elongation factor Tu of Acaryochloris marina (strain MBIC 11017).